Here is a 403-residue protein sequence, read N- to C-terminus: Glucosyl-3-phosphoglycerate synthase (403 aa).

A divalent metal cation is bound at residue Asp-150. 189 to 192 (GRVT) provides a ligand contact to (2R)-3-phosphoglycerate. His-273 lines the a divalent metal cation pocket.

It belongs to the glycosyltransferase 2 family. Homodimer. It depends on Mn(2+) as a cofactor. The cofactor is Co(2+). Mg(2+) serves as cofactor. Requires Ni(2+) as cofactor.

It catalyses the reaction an NDP-alpha-D-glucose + (2R)-3-phosphoglycerate = (2R)-2-O-(alpha-D-glucopyranosyl)-3-phospho-glycerate + a ribonucleoside 5'-diphosphate + H(+). Its function is as follows. Involved in the biosynthesis of 6-O-methylglucose lipopolysaccarides (MGLPs). Catalyzes the transfer of a glucose (Glc) moiety from uridine diphosphate (UDP-Glc) to the position 2 of 3-phospho-D-glycerate (3-PGA) to form glucosyl-3-phosphoglycerate (GPG). GpgS is most active with UDP-glucose, followed by GDP-glucose, ADP-glucose, and to a lesser extent, TDP-glucose. 3-PGA is the only acceptor for these glucosyl donors. In Persephonella marina (strain DSM 14350 / EX-H1), this protein is Glucosyl-3-phosphoglycerate synthase.